We begin with the raw amino-acid sequence, 228 residues long: Large ribosomal subunit protein uL1 (228 aa).

It belongs to the universal ribosomal protein uL1 family. Part of the 50S ribosomal subunit.

Functionally, binds directly to 23S rRNA. The L1 stalk is quite mobile in the ribosome, and is involved in E site tRNA release. In terms of biological role, protein L1 is also a translational repressor protein, it controls the translation of the L11 operon by binding to its mRNA. The sequence is that of Large ribosomal subunit protein uL1 from Clavibacter sepedonicus (Clavibacter michiganensis subsp. sepedonicus).